Consider the following 282-residue polypeptide: Glutamyl endopeptidase (282 aa).

Residues Met-1–Ala-27 form the signal peptide. The propeptide occupies Lys-28–Ser-66. Residues His-117, Asp-159, and Ser-235 each act as charge relay system in the active site.

This sequence belongs to the peptidase S1B family. In terms of assembly, monomer.

The protein resides in the secreted. The enzyme catalyses Preferential cleavage: Glu-|-Xaa, Asp-|-Xaa.. Its activity is regulated as follows. Inhibited by diisopropyl fluorophosphate. Its function is as follows. Exhibits a significant hydrolytic activity for the carbonyl side of glutamic acid. Shows activity toward human fibronectin and type 1 collagen. In Staphylococcus epidermidis, this protein is Glutamyl endopeptidase (gseA).